A 610-amino-acid chain; its full sequence is UvrABC system protein C (610 aa).

The GIY-YIG domain maps to 13–92; sequence TLPGVYLMKN…IKQHKPRYNA (80 aa). Residues 204–239 enclose the UVR domain; it reads KDVLKDLYEEMRLLSEQLEFEKANHLLRTIRYIEKT.

Belongs to the UvrC family. Interacts with UvrB in an incision complex.

Its subcellular location is the cytoplasm. The UvrABC repair system catalyzes the recognition and processing of DNA lesions. UvrC both incises the 5' and 3' sides of the lesion. The N-terminal half is responsible for the 3' incision and the C-terminal half is responsible for the 5' incision. This chain is UvrABC system protein C, found in Protochlamydia amoebophila (strain UWE25).